Consider the following 927-residue polypeptide: DNA polymerase alpha-binding protein (927 aa).

4 WD repeats span residues 10–49 (FDFG…EEPE), 134–173 (KIDE…PNKV), 227–266 (AANR…LQKT), and 273–313 (STKA…IHYT). Phosphoserine is present on residues Ser377, Ser379, and Ser398. Residues Thr401 and Thr411 each carry the phosphothreonine modification. Residue Ser463 is modified to Phosphoserine. The WD 5 repeat unit spans residues 699-739 (GSDNTLLLLSKWRSPEESKWLPILDSNMEIWKMSGGKETTD).

The protein localises to the nucleus. Functionally, accessory factor for DNA replication. It plays a role in accurately duplicating the genome in vivo. This chain is DNA polymerase alpha-binding protein (CTF4), found in Saccharomyces cerevisiae (strain ATCC 204508 / S288c) (Baker's yeast).